We begin with the raw amino-acid sequence, 240 residues long: Seed lectin (240 aa).

Asn-111 carries N-linked (GlcNAc...) asparagine glycosylation. Positions 123 and 125 each coordinate Mn(2+). Residues Asp-125, Asn-129, and Asp-132 each coordinate Ca(2+). Positions 132 and 137 each coordinate Mn(2+). Asn-183 carries an N-linked (GlcNAc...) asparagine glycan.

This sequence belongs to the leguminous lectin family. In terms of assembly, homotetramer. In terms of processing, partially N-glycosylated at Asn-111 and Asn-183 with the heptasaccharide [(beta-xylosyl-1,2)(alpha-mannosyl-1,6)(alpha-mannosyl-1,3)]beta-manosyl-1,4-GlcNAC-beta-1,4-GlcNAc-beta-1,4 [alpha-fucosyl-1,3]GlcNAc. A small proportion of alpha chains are proteolytically cleaved at 114-115 into gamma and beta chains. This is probably dependent on the deglycosylation of Asn-111. As to expression, seed.

In terms of biological role, lectin that binds galactose. This Vatairea macrocarpa protein is Seed lectin.